We begin with the raw amino-acid sequence, 153 residues long: Putative nuclear shuttle protein (153 aa).

This sequence belongs to the nanoviridae nuclear shuttle protein family.

It is found in the host nucleus. The protein resides in the host cytoplasm. Putative nuclear shuttle protein. The protein is Putative nuclear shuttle protein (DNA-N) of Faba bean necrotic yellows virus (isolate Syrian SV292-88) (FBNYV).